The primary structure comprises 518 residues: Glutamate--cysteine ligase (518 aa).

Belongs to the glutamate--cysteine ligase type 1 family. Type 1 subfamily.

It catalyses the reaction L-cysteine + L-glutamate + ATP = gamma-L-glutamyl-L-cysteine + ADP + phosphate + H(+). The protein operates within sulfur metabolism; glutathione biosynthesis; glutathione from L-cysteine and L-glutamate: step 1/2. The chain is Glutamate--cysteine ligase from Salmonella arizonae (strain ATCC BAA-731 / CDC346-86 / RSK2980).